The chain runs to 284 residues: Probable palmitoyltransferase ZDHHC24 (284 aa).

Residues Met1–Pro18 lie on the Cytoplasmic side of the membrane. Residues Leu19–Leu39 form a helical membrane-spanning segment. Residues Gly40–Ala52 are Extracellular-facing. A helical transmembrane segment spans residues Leu53–Leu73. Residues Arg74–Arg137 lie on the Cytoplasmic side of the membrane. Residues Ala94–Leu144 enclose the DHHC domain. Catalysis depends on Cys124, which acts as the S-palmitoyl cysteine intermediate. Residues Pro138–Gly158 traverse the membrane as a helical segment. Over Pro159 to Gln166 the chain is Extracellular. The helical transmembrane segment at Ala167–Gly187 threads the bilayer. The Cytoplasmic portion of the chain corresponds to Lys188–Ala195. Residues Leu196–Phe216 traverse the membrane as a helical segment. Residues His217–Ser284 are Extracellular-facing.

Belongs to the DHHC palmitoyltransferase family.

The protein localises to the membrane. It catalyses the reaction L-cysteinyl-[protein] + hexadecanoyl-CoA = S-hexadecanoyl-L-cysteinyl-[protein] + CoA. Probable palmitoyltransferase that could catalyze the addition of palmitate onto various protein substrates. The sequence is that of Probable palmitoyltransferase ZDHHC24 from Mus musculus (Mouse).